The primary structure comprises 120 residues: Fumarate reductase subunit D (120 aa).

A run of 3 helical transmembrane segments spans residues phenylalanine 25–isoleucine 45, valine 55–proline 75, and isoleucine 100–isoleucine 120.

Belongs to the FrdD family. Part of an enzyme complex containing four subunits: a flavoprotein (FrdA), an iron-sulfur protein (FrdB), and two hydrophobic anchor proteins (FrdC and FrdD).

Its subcellular location is the cell inner membrane. Its function is as follows. Anchors the catalytic components of the fumarate reductase complex to the cell membrane, binds quinones. This chain is Fumarate reductase subunit D, found in Aliivibrio fischeri (strain MJ11) (Vibrio fischeri).